Consider the following 60-residue polypeptide: Alpha-conotoxin-like 289 (60 aa).

Residues 1-16 (MFTVFLLVVLATTVVS) form the signal peptide. Positions 17-42 (FTSDRAFRGRNAAAKASGLVGLTDKR) are excised as a propeptide. A Pyrrolidone carboxylic acid modification is found at Gln43. Cystine bridges form between Cys45–Cys51 and Cys46–Cys59. Positions 47-49 (SYP) are ser-Xaa-Pro motif, crucial for potent interaction with nAChR. Cysteine amide is present on Cys59.

It belongs to the conotoxin A superfamily. In terms of tissue distribution, expressed by the venom duct.

It localises to the secreted. Alpha-conotoxins act on postsynaptic membranes, they bind to the nicotinic acetylcholine receptors (nAChR) and thus inhibit them. The protein is Alpha-conotoxin-like 289 of Conus ammiralis (Admiral cone).